The following is a 570-amino-acid chain: Formate--tetrahydrofolate ligase (570 aa).

Residue 65–72 (TPFGEGKT) coordinates ATP.

The protein belongs to the formate--tetrahydrofolate ligase family.

It carries out the reaction (6S)-5,6,7,8-tetrahydrofolate + formate + ATP = (6R)-10-formyltetrahydrofolate + ADP + phosphate. The protein operates within one-carbon metabolism; tetrahydrofolate interconversion. This Shewanella sediminis (strain HAW-EB3) protein is Formate--tetrahydrofolate ligase.